Reading from the N-terminus, the 137-residue chain is MTQLWVERTGTRRYIGRSTRGAQVLVGSEDVDGVFTPGELLKIALAACSGMASDQPLARRLGDDYQAVVKVSGAADRDQERYPLIEETMELDLSGLTEDEKERLLVVINRAVELACTVGRTLKSGTTVNLEVVDVGA.

This is an uncharacterized protein from Mycobacterium tuberculosis (strain ATCC 25618 / H37Rv).